The chain runs to 270 residues: 27 kDa core protein (270 aa).

The protein belongs to the chordopoxvirinae D3 family.

The protein resides in the virion. In terms of biological role, late protein which is part of a large complex required for early virion morphogenesis. This complex participates in the formation of virosomes and the incorporation of virosomal contents into nascent immature virions. The chain is 27 kDa core protein from Vertebrata (FPV).